A 727-amino-acid polypeptide reads, in one-letter code: Catalase-peroxidase (727 aa).

The interval 1–26 is disordered; the sequence is MDTKVETGGKCPVAHGPAGAKGRGNR. Residues 97–219 constitute a cross-link (tryptophyl-tyrosyl-methioninium (Trp-Tyr) (with M-245)); it reads WHSAGTYRIT…LGAVQMGLIY (123 aa). His-98 serves as the catalytic Proton acceptor. The tryptophyl-tyrosyl-methioninium (Tyr-Met) (with W-97) cross-link spans 219–245; it reads YVNPEGPNGNPDPIAAARDIRETFSRM. His-260 serves as a coordination point for heme b.

Belongs to the peroxidase family. Peroxidase/catalase subfamily. As to quaternary structure, homodimer or homotetramer. The cofactor is heme b. Post-translationally, formation of the three residue Trp-Tyr-Met cross-link is important for the catalase, but not the peroxidase activity of the enzyme.

The catalysed reaction is H2O2 + AH2 = A + 2 H2O. It carries out the reaction 2 H2O2 = O2 + 2 H2O. In terms of biological role, bifunctional enzyme with both catalase and broad-spectrum peroxidase activity. The polypeptide is Catalase-peroxidase (Allorhizobium ampelinum (strain ATCC BAA-846 / DSM 112012 / S4) (Agrobacterium vitis (strain S4))).